The following is a 510-amino-acid chain: P-(S)-hydroxymandelonitrile lyase (510 aa).

The first 34 residues, 1-34 (MAVFISSSGSPGRATATTTTTTTLLLAVLAAAAA), serve as a signal peptide directing secretion. 116-118 (NGG) contributes to the substrate binding site. 3 disulfides stabilise this stretch: Cys121/Cys377, Cys277/Cys289, and Cys313/Cys344. Asn172 is a glycosylation site (N-linked (GlcNAc...) asparagine). Residue 212–213 (ES) participates in substrate binding. Ser213 is an active-site residue. The N-linked (GlcNAc...) asparagine glycan is linked to Asn365. Catalysis depends on residues Asp414 and His469. Residue 465–469 (SGAGH) participates in substrate binding.

Belongs to the peptidase S10 family. As to quaternary structure, heterotetramer of two A and two B chains. The A and B chains are linked by a disulfide bond. The N-terminus of chain A is blocked. Primary leaves of seedlings.

The catalysed reaction is (S)-4-hydroxymandelonitrile = 4-hydroxybenzaldehyde + hydrogen cyanide. Its function is as follows. Involved in cyanogenesis, the release of HCN from injured tissues. Is involved in the catabolism of the cyanogenic glycoside dhurrin. In Sorghum bicolor (Sorghum), this protein is P-(S)-hydroxymandelonitrile lyase.